Consider the following 95-residue polypeptide: Aspartyl/glutamyl-tRNA(Asn/Gln) amidotransferase subunit C (95 aa).

It belongs to the GatC family. In terms of assembly, heterotrimer of A, B and C subunits.

It catalyses the reaction L-glutamyl-tRNA(Gln) + L-glutamine + ATP + H2O = L-glutaminyl-tRNA(Gln) + L-glutamate + ADP + phosphate + H(+). It carries out the reaction L-aspartyl-tRNA(Asn) + L-glutamine + ATP + H2O = L-asparaginyl-tRNA(Asn) + L-glutamate + ADP + phosphate + 2 H(+). Allows the formation of correctly charged Asn-tRNA(Asn) or Gln-tRNA(Gln) through the transamidation of misacylated Asp-tRNA(Asn) or Glu-tRNA(Gln) in organisms which lack either or both of asparaginyl-tRNA or glutaminyl-tRNA synthetases. The reaction takes place in the presence of glutamine and ATP through an activated phospho-Asp-tRNA(Asn) or phospho-Glu-tRNA(Gln). In Chlorobium luteolum (strain DSM 273 / BCRC 81028 / 2530) (Pelodictyon luteolum), this protein is Aspartyl/glutamyl-tRNA(Asn/Gln) amidotransferase subunit C.